Consider the following 185-residue polypeptide: TATA-box-binding protein 3 (185 aa).

Tandem repeats lie at residues 7 to 84 and 100 to 178.

Belongs to the TBP family.

Functionally, general factor that plays a role in the activation of archaeal genes transcribed by RNA polymerase. Binds specifically to the TATA box promoter element which lies close to the position of transcription initiation. The chain is TATA-box-binding protein 3 from Methanosarcina acetivorans (strain ATCC 35395 / DSM 2834 / JCM 12185 / C2A).